Here is a 178-residue protein sequence, read N- to C-terminus: RNA replicase polyprotein (178 aa).

Belongs to the tymovirus NS35 RNA replicase polyprotein family.

It catalyses the reaction RNA(n) + a ribonucleoside 5'-triphosphate = RNA(n+1) + diphosphate. In Physalis heterophylla (PhMV), this protein is RNA replicase polyprotein.